Consider the following 304-residue polypeptide: MGPTASGKTSLAIDLKKRKEKIDIISVDSALIYRDMDIGTAKPVAEELKLAPHKLINIRDPVECYSAADFYRDADNEMENIIQSEHTPFLVGGTMLYFKTLLDGLFFLPATNQKIRDDLEYEAKRTGWINIHDLLKHIDPISANKIHLNDHKRIIRALEIFFISGKTWTELKLINNQKLKYRFHQFAVVPSSRDLLYKRIEERFHRMLDIGFEDEVIKLFNRSDLHTKEVKSSISCVGYRQMWEYLSGDINYNQMIIKGICATRQLAKRQLTWLRRWPNLCWLNSDNLSAATDSISKILIEKSI.

Position 2-9 (2-9 (GPTASGKT)) interacts with ATP. 4–9 (TASGKT) provides a ligand contact to substrate. Positions 28–31 (DSAL) are interaction with substrate tRNA.

Belongs to the IPP transferase family. Monomer. The cofactor is Mg(2+).

The catalysed reaction is adenosine(37) in tRNA + dimethylallyl diphosphate = N(6)-dimethylallyladenosine(37) in tRNA + diphosphate. Its function is as follows. Catalyzes the transfer of a dimethylallyl group onto the adenine at position 37 in tRNAs that read codons beginning with uridine, leading to the formation of N6-(dimethylallyl)adenosine (i(6)A). The protein is tRNA dimethylallyltransferase of Blochmanniella pennsylvanica (strain BPEN).